Consider the following 1345-residue polypeptide: MVYSYSEKKRIRKDFGKRPQVLDIPYLLSIQLDSFKKFTDQDPTGERGLEAAFRSVFPIKSFSGNSELQYVSYKLGEPVFDVKECQIRGVTYSAPLRVKLRMVLYDREAAAGTVKDIKEQEVYMGDIPLMTDNGTFVINGTERVIVSQLHRSPGVFFDHDRGKTHSSGKVLYNARIIPYRGSWLDFEFDPKDALFVRIDRRRKLPATIILRALEYSTQEILDLFFERVEFKIKKDTLVMTLVPERLRGETASYDIKDAEGTVLVEAGRRVTARHIRQLEKTNTTELEVPVEYIVGKYAAQDYIDPDTGEVLVSANSEISLEDLAKLSLAGIKELSTLYINELDHGAYISDTLRIDPTTNRLEALVEIYRMMRPGEPPTKDAAEALFQNLFFSEERYDLSKVGRMKFNRRLSIPDDEGSGVLSKEDIVAVMKNIIHIRNGFDEVDDIDHLGNRRIRSVGEMAENQFRVGLVRVERAVRERLSLGDLNELMPQDLINAKPISAAVKEFFGSSQLSQFMDQNNPLSEVTHKRRISALGPGGLTRERAGFEVRDVHPTHYGRLCPIETPEGPNIGLINSLASFARTNSYGFLETPYRKVVDGVITDEVEYLSAIEEGRYVIAQANIEVDSEGRMVEEQIACRHKGESTFMRASDIQYMDVSPQQIISVAASLIPFLEHDDANRALMGANMQRQAVPTLRSEKPLVGTGIERTLAVDSGVVVAAKRGGVIDYVDASRIVVKVNEDELRPGEAGIDIYNLTKYTRSNQNTCINQRPCCSVGEPVVRGDVLADGPSTDLGDLALGQNMRIAFMPWNGYNFEDSILISERVAQEDRFTTIHIQELSCIARDTKLGSEEITADIPNVGESALSKLDESGIVYIGAEVKGGDILVGKVTPKGETQLTPEEKLLRAIFGEKASDVKDSSLRVPNSVKGTIIDVQVFTRDGVEKDKRAIEIEEMHIAQARKDLGEEFKILEEGVLSRARNLLLSAGFSEAQIAALPRKDVLVQVIDDEAKQTELEQLAEQHEELKADFDKKFEIKRRKITQGDDLAPGVLKIVKVYLAVKRTIQPGDKMAGRHGNKGVISKINPIEDMPYDEQGNPVDIVLNPLGVPSRMNIGQVLEVHLGAAAKGIGHKIAAMLEDQREKGLAEVRNYIKQVYELGDEVQQRVDIDSFTDDELLRLANNLKGGIPVATPAFDGAKEKEIKQMLELAGLPTSGQLKLFDGRTGNEFERPVTVGYMYMLKLNHLVDDKMHARSTGSYSLVTQQPLGGKAQFGGQRFGEMEVWALEAYGAAYTLQEMLTVKSDDVNGRTQMYKNIVDGNHQMQPGMPESFNVLLKEIRSLGINIELDQE.

Belongs to the RNA polymerase beta chain family. As to quaternary structure, the RNAP catalytic core consists of 2 alpha, 1 beta, 1 beta' and 1 omega subunit. When a sigma factor is associated with the core the holoenzyme is formed, which can initiate transcription.

It catalyses the reaction RNA(n) + a ribonucleoside 5'-triphosphate = RNA(n+1) + diphosphate. Its function is as follows. DNA-dependent RNA polymerase catalyzes the transcription of DNA into RNA using the four ribonucleoside triphosphates as substrates. This is DNA-directed RNA polymerase subunit beta from Shewanella oneidensis (strain ATCC 700550 / JCM 31522 / CIP 106686 / LMG 19005 / NCIMB 14063 / MR-1).